The primary structure comprises 159 residues: Ribosomal RNA large subunit methyltransferase H (159 aa).

Residues leucine 76, glycine 108, and 127–132 (FSKMTF) each bind S-adenosyl-L-methionine.

The protein belongs to the RNA methyltransferase RlmH family. As to quaternary structure, homodimer.

The protein localises to the cytoplasm. It catalyses the reaction pseudouridine(1915) in 23S rRNA + S-adenosyl-L-methionine = N(3)-methylpseudouridine(1915) in 23S rRNA + S-adenosyl-L-homocysteine + H(+). Specifically methylates the pseudouridine at position 1915 (m3Psi1915) in 23S rRNA. The sequence is that of Ribosomal RNA large subunit methyltransferase H from Bifidobacterium adolescentis (strain ATCC 15703 / DSM 20083 / NCTC 11814 / E194a).